A 124-amino-acid polypeptide reads, in one-letter code: Small ribosomal subunit protein bS6 (124 aa).

The segment at 96–124 (ETAPSPMMKEVQREEARKAAQTTTEGQAA) is disordered. Positions 115–124 (AQTTTEGQAA) are enriched in polar residues.

Belongs to the bacterial ribosomal protein bS6 family.

Binds together with bS18 to 16S ribosomal RNA. This Cupriavidus pinatubonensis (strain JMP 134 / LMG 1197) (Cupriavidus necator (strain JMP 134)) protein is Small ribosomal subunit protein bS6.